Consider the following 290-residue polypeptide: MAGLHSRLTTFLLLLLSALPAIAAAAPSSGCGKGPTLRNGQTVTTNINGKSRRYTVRLPDNYNQNNPYRLIFLWHPLGSSMQKIIQGEDPNRGGVLPYYGLPPLDTSKSAIYVVPDGLNAGWANQNGEDVSFFDNILQTVSDGLCIDTNLVFSTGFSYGGGMSFSLACSRANKVRAVAVISGAQLSGCAGGNDPVAYYAQHGTSDGVLNVAMGRQLRDRFVRNNGCQPANGEVQPGSGGRSTRVEYQGCQQGKDVVWVVHGGDHNPSQRDPGQNDPFAPRNTWEFFSRFN.

Residues 1-25 (MAGLHSRLTTFLLLLLSALPAIAAA) form the signal peptide. Positions 260-280 (HGGDHNPSQRDPGQNDPFAPR) are disordered.

It belongs to the serine esterase family.

The protein localises to the secreted. It carries out the reaction feruloyl-polysaccharide + H2O = ferulate + polysaccharide.. Its function is as follows. Involved in degradation of plant cell walls. Hydrolyzes the feruloyl-arabinose ester bond in arabinoxylans as well as the feruloyl-galactose and feruloyl-arabinose ester bonds in pectin. Active against methyl esters of ferulate (MFA), sinapate (MSA), caffeate (MCA) and p-coumarate (MpCA). In Neurospora crassa (strain ATCC 24698 / 74-OR23-1A / CBS 708.71 / DSM 1257 / FGSC 987), this protein is Feruloyl esterase D.